Reading from the N-terminus, the 221-residue chain is GDP-perosamine N-acetyltransferase (221 aa).

The active-site Proton acceptor is the H139.

It belongs to the transferase hexapeptide repeat family. Homotrimer.

The catalysed reaction is GDP-alpha-D-perosamine + acetyl-CoA = GDP-N-acetyl-alpha-D-perosamine + CoA + H(+). It functions in the pathway bacterial outer membrane biogenesis; LPS O-antigen biosynthesis. In terms of biological role, catalyzes the transfer of an acetyl residue from acetyl-CoA onto GDP-perosamine to form GDP-N-acetyl-perosamine. The polypeptide is GDP-perosamine N-acetyltransferase (Escherichia coli O157:H7).